The following is a 108-amino-acid chain: Pyrimidine/purine nucleoside phosphorylase (108 aa).

It belongs to the nucleoside phosphorylase PpnP family.

The catalysed reaction is a purine D-ribonucleoside + phosphate = a purine nucleobase + alpha-D-ribose 1-phosphate. It carries out the reaction adenosine + phosphate = alpha-D-ribose 1-phosphate + adenine. It catalyses the reaction cytidine + phosphate = cytosine + alpha-D-ribose 1-phosphate. The enzyme catalyses guanosine + phosphate = alpha-D-ribose 1-phosphate + guanine. The catalysed reaction is inosine + phosphate = alpha-D-ribose 1-phosphate + hypoxanthine. It carries out the reaction thymidine + phosphate = 2-deoxy-alpha-D-ribose 1-phosphate + thymine. It catalyses the reaction uridine + phosphate = alpha-D-ribose 1-phosphate + uracil. The enzyme catalyses xanthosine + phosphate = alpha-D-ribose 1-phosphate + xanthine. Functionally, catalyzes the phosphorolysis of diverse nucleosides, yielding D-ribose 1-phosphate and the respective free bases. Can use uridine, adenosine, guanosine, cytidine, thymidine, inosine and xanthosine as substrates. Also catalyzes the reverse reactions. In Polaromonas sp. (strain JS666 / ATCC BAA-500), this protein is Pyrimidine/purine nucleoside phosphorylase.